The primary structure comprises 438 residues: Indole diterpene prenyltransferase janD (438 aa).

Residue 80–81 (FM) coordinates L-tryptophan. Residues Arg-102, Lys-190, Arg-264, Lys-266, Tyr-268, Tyr-350, Tyr-414, and Tyr-418 each coordinate substrate.

Belongs to the tryptophan dimethylallyltransferase family.

Its pathway is secondary metabolite biosynthesis. Indole diterpene prenyltransferase; part of the gene cluster that mediates the biosynthesis of the indole diterpenes janthitremanes such as shearinine K or shearinine A. The geranylgeranyl diphosphate (GGPP) synthase janG catalyzes the first step in janthitremane biosynthesis via conversion of farnesyl pyrophosphate and isopentyl pyrophosphate into geranylgeranyl pyrophosphate (GGPP). Condensation of indole-3-glycerol phosphate with GGPP by the prenyl transferase janC then forms 3-geranylgeranylindole (3-GGI). Epoxidation by the FAD-dependent monooxygenase janM leads to a epoxidized-GGI that is substrate of the terpene cyclase janB for cyclization to yield paspaline. Paspaline is subsequently converted to 13-desoxypaspaline by the cytochrome P450 monooxygenase janP, via beta-PC-M6 in a series of alpha-face oxidations. The cytochrome P450 monooxygenase janQ is proposed to carry out sequential beta-face oxidation steps at C-7 and C-13 of 13-desoxypaspaline to form paspalicine and paspalinine respectively. The indole diterpene prenyltransferase janD may then convert paspalinine into shearinine K which is substrate of janO and/or additional enzymes for oxidation and cyclization to generate shearinine A. The protein is Indole diterpene prenyltransferase janD of Penicillium janthinellum (Penicillium vitale).